The following is a 348-amino-acid chain: Dihydroorotase (348 aa).

Residues histidine 17 and histidine 19 each coordinate Zn(2+). Residues 19–21 and asparagine 45 each bind substrate; that span reads HLR. Residues lysine 103, histidine 140, and histidine 178 each contribute to the Zn(2+) site. Lysine 103 is modified (N6-carboxylysine). Histidine 140 serves as a coordination point for substrate. Leucine 223 serves as a coordination point for substrate. Residue aspartate 251 coordinates Zn(2+). Residue aspartate 251 is part of the active site. Residues histidine 255 and alanine 267 each coordinate substrate.

Belongs to the metallo-dependent hydrolases superfamily. DHOase family. Class II DHOase subfamily. Homodimer. Zn(2+) is required as a cofactor.

The enzyme catalyses (S)-dihydroorotate + H2O = N-carbamoyl-L-aspartate + H(+). The protein operates within pyrimidine metabolism; UMP biosynthesis via de novo pathway; (S)-dihydroorotate from bicarbonate: step 3/3. Its function is as follows. Catalyzes the reversible cyclization of carbamoyl aspartate to dihydroorotate. The polypeptide is Dihydroorotase (Salmonella heidelberg (strain SL476)).